The chain runs to 172 residues: Tail tube protein (172 aa).

The protein belongs to the P2likevirus major tail tube protein family.

The protein localises to the virion. Its function is as follows. Forms the virus tail tube. This Escherichia phage P2 (Bacteriophage P2) protein is Tail tube protein (FII).